Reading from the N-terminus, the 346-residue chain is Methylthioribose-1-phosphate isomerase (346 aa).

Residues Arg-46 to Ala-48, Arg-89, and Gln-196 contribute to the substrate site. The active-site Proton donor is the Asp-237. Substrate is bound at residue Asn-247–Lys-248.

Belongs to the eIF-2B alpha/beta/delta subunits family. MtnA subfamily.

It catalyses the reaction 5-(methylsulfanyl)-alpha-D-ribose 1-phosphate = 5-(methylsulfanyl)-D-ribulose 1-phosphate. It functions in the pathway amino-acid biosynthesis; L-methionine biosynthesis via salvage pathway; L-methionine from S-methyl-5-thio-alpha-D-ribose 1-phosphate: step 1/6. Catalyzes the interconversion of methylthioribose-1-phosphate (MTR-1-P) into methylthioribulose-1-phosphate (MTRu-1-P). This chain is Methylthioribose-1-phosphate isomerase, found in Trichlorobacter lovleyi (strain ATCC BAA-1151 / DSM 17278 / SZ) (Geobacter lovleyi).